The sequence spans 1192 residues: Plakophilin-4 (1192 aa).

The segment at 1 to 31 (MPAPEQASLVEEGQPQTRQEAASTGPGMEPE) is disordered. Positions 36–70 (TILASVKEQELQFQRLTRELEVERQIVASQLERCR) form a coiled coil. Residues 73 to 262 (AESPSIASTS…PRPLNPSAYS (190 aa)) are disordered. Ser-75 bears the Phosphoserine mark. Polar residues predominate over residues 77-86 (SIASTSSTEK). Thr-84 is subject to Phosphothreonine. Ser-106, Ser-132, Ser-136, and Ser-139 each carry phosphoserine. Polar residues-rich tracts occupy residues 138–156 (GSLG…SDSG), 163–204 (FHNS…QPSV), and 214–230 (SVPS…STGV). Phosphoserine is present on residues Ser-221, Ser-231, and Ser-236. The span at 231-242 (SPSRGSLRTSLG) shows a compositional bias: low complexity. Omega-N-methylarginine is present on residues Arg-254 and Arg-270. Residues Ser-273 and Ser-281 each carry the phosphoserine modification. The tract at residues 290 to 310 (SVTSRQTSNPNGPTPQYQTTA) is disordered. Phosphoserine is present on residues Ser-314, Ser-327, and Ser-337. The tract at residues 323 to 348 (TRVASPSQGQVGSSSPKRSGMTAVPQ) is disordered. Residues 325–338 (VASPSQGQVGSSSP) are compositionally biased toward low complexity. Tyr-372 bears the Phosphotyrosine mark. Phosphoserine occurs at positions 392, 403, and 406. Position 412 is a phosphothreonine (Thr-412). Tyr-415 is subject to Phosphotyrosine. One copy of the ARM 1 repeat lies at 415-455 (YEGRTYYSPVYRSPNHGTVELQGSQTALYRTGSVGIGNLQR). 3 positions are modified to phosphoserine: Ser-422, Ser-427, and Ser-438. Tyr-478 carries the post-translational modification Phosphotyrosine. 3 positions are modified to phosphoserine: Ser-510, Ser-512, and Ser-515. ARM repeat units follow at residues 518–557 (KDPR…HLCF), 560–599 (NKVK…NLVF), 604–644 (DENK…NLSS), 660–702 (LTNT…NLSS), and 706–751 (EARK…NLSY). Residues 773–782 (GKESPSKDSE) are compositionally biased toward basic and acidic residues. The segment at 773–810 (GKESPSKDSEPSCWGKKKKKKKRTPQEDQWDGVGPIPG) is disordered. At Ser-776 the chain carries Phosphoserine. ARM repeat units lie at residues 815 to 855 (PKGV…NLSA), 862 to 901 (AYIR…NMAL), and 950 to 993 (MENA…TLWQ). Phosphothreonine occurs at positions 1013 and 1017. The residue at position 1045 (Ser-1045) is a Phosphoserine. The interval 1058 to 1086 (PRSEYDRTQPPMQYYNSQGDATHKGLYPG) is disordered. Polar residues predominate over residues 1067–1077 (PPMQYYNSQGD). Phosphoserine is present on residues Ser-1091, Ser-1100, and Ser-1135.

This sequence belongs to the beta-catenin family. As to quaternary structure, interacts with PDZD2. Interacts (via the C-terminus) with FRMPD2 (via the PDZ 2 domain). Interacts with RHOA; the interaction is detected at the midbody. Interacts with ECT2; the interaction is detected at the midbody. Interacts with CCDC85B. As to expression, expressed in salivary glands (at protein level). Expressed in arrector pili muscle (at protein level).

The protein resides in the cell junction. The protein localises to the desmosome. It localises to the cytoplasm. It is found in the cytoskeleton. Its subcellular location is the spindle. The protein resides in the midbody. The protein localises to the cell membrane. Its function is as follows. Plays a role as a regulator of Rho activity during cytokinesis. May play a role in junctional plaques. This is Plakophilin-4 (PKP4) from Homo sapiens (Human).